The following is a 149-amino-acid chain: UPF0178 protein Mmwyl1_2258 (149 aa).

It belongs to the UPF0178 family.

This chain is UPF0178 protein Mmwyl1_2258, found in Marinomonas sp. (strain MWYL1).